A 344-amino-acid polypeptide reads, in one-letter code: Aspartate carbamoyltransferase catalytic subunit (344 aa).

The tract at residues 1–30 (MPESPPLPKRSPLMTSSTTRPASDYPPGGD) is disordered. Residues Arg88 and Thr89 each coordinate carbamoyl phosphate. Lys116 is an L-aspartate binding site. Carbamoyl phosphate is bound by residues Arg138, His166, and Gln169. Residues Arg199 and Arg253 each contribute to the L-aspartate site. Carbamoyl phosphate is bound by residues Gly294 and Pro295.

It belongs to the aspartate/ornithine carbamoyltransferase superfamily. ATCase family. As to quaternary structure, heterododecamer (2C3:3R2) of six catalytic PyrB chains organized as two trimers (C3), and six regulatory PyrI chains organized as three dimers (R2).

The enzyme catalyses carbamoyl phosphate + L-aspartate = N-carbamoyl-L-aspartate + phosphate + H(+). Its pathway is pyrimidine metabolism; UMP biosynthesis via de novo pathway; (S)-dihydroorotate from bicarbonate: step 2/3. Catalyzes the condensation of carbamoyl phosphate and aspartate to form carbamoyl aspartate and inorganic phosphate, the committed step in the de novo pyrimidine nucleotide biosynthesis pathway. This is Aspartate carbamoyltransferase catalytic subunit from Sphingopyxis alaskensis (strain DSM 13593 / LMG 18877 / RB2256) (Sphingomonas alaskensis).